We begin with the raw amino-acid sequence, 331 residues long: Ketol-acid reductoisomerase (NADP(+)) (331 aa).

The region spanning M1–T182 is the KARI N-terminal Rossmann domain. NADP(+) is bound by residues Y25–Q28, S51, S53, and D83–Q86. Residue H108 is part of the active site. G134 lines the NADP(+) pocket. Residues N183–L328 form the KARI C-terminal knotted domain. The Mg(2+) site is built by D191, E195, E227, and E231. A substrate-binding site is contributed by S252.

This sequence belongs to the ketol-acid reductoisomerase family. Mg(2+) serves as cofactor.

It catalyses the reaction (2R)-2,3-dihydroxy-3-methylbutanoate + NADP(+) = (2S)-2-acetolactate + NADPH + H(+). It carries out the reaction (2R,3R)-2,3-dihydroxy-3-methylpentanoate + NADP(+) = (S)-2-ethyl-2-hydroxy-3-oxobutanoate + NADPH + H(+). Its pathway is amino-acid biosynthesis; L-isoleucine biosynthesis; L-isoleucine from 2-oxobutanoate: step 2/4. It functions in the pathway amino-acid biosynthesis; L-valine biosynthesis; L-valine from pyruvate: step 2/4. Its function is as follows. Involved in the biosynthesis of branched-chain amino acids (BCAA). Catalyzes an alkyl-migration followed by a ketol-acid reduction of (S)-2-acetolactate (S2AL) to yield (R)-2,3-dihydroxy-isovalerate. In the isomerase reaction, S2AL is rearranged via a Mg-dependent methyl migration to produce 3-hydroxy-3-methyl-2-ketobutyrate (HMKB). In the reductase reaction, this 2-ketoacid undergoes a metal-dependent reduction by NADPH to yield (R)-2,3-dihydroxy-isovalerate. In Synechococcus sp. (strain RCC307), this protein is Ketol-acid reductoisomerase (NADP(+)).